We begin with the raw amino-acid sequence, 721 residues long: Quinolinate synthase, chloroplastic (721 aa).

Residues Met1–Thr67 constitute a chloroplast transit peptide. Cys133 serves as the catalytic Cysteine persulfide intermediate. 2 residues coordinate iminosuccinate: His283 and Ser309. Cys363 contributes to the [4Fe-4S] cluster binding site. Iminosuccinate contacts are provided by residues Tyr392–Asn394 and Ser414. Position 487 (Cys487) interacts with [4Fe-4S] cluster. Residues His513–Glu515 and Thr538 each bind iminosuccinate. Cys643 serves as a coordination point for [4Fe-4S] cluster.

It belongs to the quinolinate synthase family. Type 1 subfamily. As to quaternary structure, homodimer. Requires [4Fe-4S] cluster as cofactor.

The protein resides in the plastid. It is found in the chloroplast. It carries out the reaction iminosuccinate + dihydroxyacetone phosphate = quinolinate + phosphate + 2 H2O + H(+). It functions in the pathway alkaloid biosynthesis; nicotine biosynthesis. It participates in cofactor biosynthesis; NAD(+) biosynthesis; quinolinate from iminoaspartate: step 1/1. Its function is as follows. Involved in the biosynthesis of pyridine alkaloid natural products, leading mainly to the production of anabasine, anatabine, nicotine and nornicotine, effective deterrents against herbivores with antiparasitic and pesticide properties (neurotoxins); nornicotine serves as the precursor in the synthesis of the carcinogen compound N'-nitrosonornicotine (NNN). Catalyzes the condensation of iminoaspartate with dihydroxyacetone phosphate to form quinolinate. The chain is Quinolinate synthase, chloroplastic from Nicotiana tabacum (Common tobacco).